The chain runs to 34 residues: MSDIN-like toxin proprotein 12 (34 aa).

Positions 1-10 (MSDINATRLP) are excised as a propeptide. The segment at residues 11-19 (HPFPLGLQP) is a cross-link (cyclopeptide (His-Pro)). Residues 20-34 (CAGDVDNLTLTKGEG) constitute a propeptide that is removed on maturation.

The protein belongs to the MSDIN fungal toxin family. Processed by the macrocyclase-peptidase enzyme POPB to yield a toxic cyclic nonapeptide. POPB first removes 10 residues from the N-terminus. Conformational trapping of the remaining peptide forces the enzyme to release this intermediate rather than proceed to macrocyclization. The enzyme rebinds the remaining peptide in a different conformation and catalyzes macrocyclization of the N-terminal 9 residues.

Functionally, probable toxin that belongs to the MSDIN-like toxin family responsible for a large number of food poisoning cases and deaths. This chain is MSDIN-like toxin proprotein 12, found in Amanita bisporigera (Destroying angel).